Consider the following 403-residue polypeptide: Dynactin subunit 2-A (403 aa).

The segment at 1–26 is disordered; it reads MADPKYADLPGIARNEPDVYETSDLP. A coiled-coil region spans residues 99 to 132; it reads PQQKYQRLLHEVQELTQEVEKTQSTVKESAAEEK. The tract at residues 183 to 203 is disordered; sequence AAKTRKNPEGKSPAKGPGPDT. Residues 381–401 adopt a coiled-coil conformation; the sequence is KENLATVEDNFSNIDGRIKKL.

Belongs to the dynactin subunit 2 family. In terms of assembly, subunit of dynactin, a multiprotein complex part of a tripartite complex with dynein and a adapter, such as BICDL1, BICD2 or HOOK3. The dynactin complex is built around ACTR1A/ACTB filament and consists of an actin-related filament composed of a shoulder domain, a pointed end and a barbed end. Its length is defined by its flexible shoulder domain. The soulder is composed of 2 DCTN1 subunits, 4 DCTN2 and 2 DCTN3.

The protein resides in the cytoplasm. It is found in the cytoskeleton. It localises to the microtubule organizing center. Its subcellular location is the centrosome. The protein localises to the membrane. Its function is as follows. Part of the dynactin complex that activates the molecular motor dynein for ultra-processive transport along microtubules. In the dynactin soulder domain, binds the ACTR1A filament and acts as a molecular ruler to determine the length. Modulates cytoplasmic dynein binding to an organelle, and plays a role in prometaphase chromosome alignment and spindle organization during mitosis. Involved in anchoring microtubules to centrosomes. This is Dynactin subunit 2-A (dctn2-a) from Xenopus laevis (African clawed frog).